Here is a 190-residue protein sequence, read N- to C-terminus: Threonylcarbamoyl-AMP synthase (190 aa).

Residues 7–190 (SEAVAHAVAV…ALTGELFRQG (184 aa)) enclose the YrdC-like domain.

It belongs to the SUA5 family. TsaC subfamily.

The protein resides in the cytoplasm. The enzyme catalyses L-threonine + hydrogencarbonate + ATP = L-threonylcarbamoyladenylate + diphosphate + H2O. Its function is as follows. Required for the formation of a threonylcarbamoyl group on adenosine at position 37 (t(6)A37) in tRNAs that read codons beginning with adenine. Catalyzes the conversion of L-threonine, HCO(3)(-)/CO(2) and ATP to give threonylcarbamoyl-AMP (TC-AMP) as the acyladenylate intermediate, with the release of diphosphate. The sequence is that of Threonylcarbamoyl-AMP synthase from Klebsiella pneumoniae subsp. pneumoniae (strain ATCC 700721 / MGH 78578).